The chain runs to 121 residues: Flagellar protein FliT (121 aa).

The segment at 1–50 (MNHAPHLYFAWQQLVEKSQLMLRLATEEQWDELIASEMAYVNAVQEIAHL) is required for homodimerization. Positions 60–98 (MQEQLRPMLRLILDNESKVKQLLQIRMDELAKLVGQSSV) are fliD binding.

It belongs to the FliT family. Homodimer. Interacts with FliD and FlhC.

The protein resides in the cytoplasm. The protein localises to the cytosol. In terms of biological role, dual-function protein that regulates the transcription of class 2 flagellar operons and that also acts as an export chaperone for the filament-capping protein FliD. As a transcriptional regulator, acts as an anti-FlhDC factor; it directly binds FlhC, thus inhibiting the binding of the FlhC/FlhD complex to class 2 promoters, resulting in decreased expression of class 2 flagellar operons. As a chaperone, effects FliD transition to the membrane by preventing its premature polymerization, and by directing it to the export apparatus. In Escherichia coli O139:H28 (strain E24377A / ETEC), this protein is Flagellar protein FliT.